We begin with the raw amino-acid sequence, 640 residues long: DNA topoisomerase 3 (640 aa).

A Toprim domain is found at 21 to 175 (RVLCVAEKNS…WRAQFSHLEP (155 aa)). 3 residues coordinate Mg(2+): Glu27, Asp137, and Asp139. One can recognise a Topo IA-type catalytic domain in the interval 189 to 618 (DMKLVAAVEC…QLLPLYKEAF (430 aa)). The active-site O-(5'-phospho-DNA)-tyrosine intermediate is Tyr354.

This sequence belongs to the type IA topoisomerase family. It depends on Mg(2+) as a cofactor.

It carries out the reaction ATP-independent breakage of single-stranded DNA, followed by passage and rejoining.. Its function is as follows. Introduces a single-strand break via transesterification at a target site in duplex DNA. Releases the supercoiling and torsional tension of DNA introduced during the DNA replication and transcription by transiently cleaving and rejoining one strand of the DNA duplex. The scissile phosphodiester is attacked by the catalytic tyrosine of the enzyme, resulting in the formation of a DNA-(5'-phosphotyrosyl)-enzyme intermediate and the expulsion of a 3'-OH DNA strand. The chain is DNA topoisomerase 3 (TOP3) from Candidozyma auris (Yeast).